The sequence spans 965 residues: Serine/threonine-protein kinase tousled-like 1 (965 aa).

6 disordered regions span residues 1–22, 35–72, 95–120, 172–292, 320–402, and 538–576; these read MSMLSMDGIVAGGGSSSGGGER, PQNKALPTVQSSGSSSNHAPIVGESPLGTVSSTMATGD, QNSSHPSTSVMMQQVPPQNGGATRSS, NHQQ…KQER, QNQG…QSGR, and RKPLGIGKEPKRPQAVNSQNDSNGMQPSTSSNTNGDDAI. A compositionally biased stretch (gly residues) spans 10 to 21; the sequence is VAGGGSSSGGGE. Residues 42 to 52 are compositionally biased toward polar residues; sequence TVQSSGSSSNH. The segment covering 172 to 231 has biased composition (low complexity); the sequence is NHQQQMQQMHYHQQQQQYQQQQAQHHQMYAPQIQQQQQQPQQQSQQQSAQQPQQSSAALQ. 2 stretches are compositionally biased toward polar residues: residues 233 to 244 and 320 to 341; these read VNESSNLSSAGS and QNQGSPKRQPAVQQNGSNSYDS. A compositionally biased stretch (low complexity) spans 342–355; it reads QQQQPQMNQHEMQN. The segment covering 365-381 has biased composition (polar residues); sequence LGVNNRGTPTPTQQQHY. Low complexity predominate over residues 382 to 401; sequence SSDSNSNSNQSPPGQGNQSG. Polar residues predominate over residues 552–572; sequence AVNSQNDSNGMQPSTSSNTNG. The residue at position 634 (Ser-634) is a Phosphoserine. The region spanning 651–928 is the Protein kinase domain; it reads YLMLNLLGKG…VFELAKHELF (278 aa). ATP is bound by residues 657–665 and Lys-680; that span reads LGKGGFSEV. Asp-781 acts as the Proton acceptor in catalysis.

The protein belongs to the protein kinase superfamily. Ser/Thr protein kinase family. In terms of assembly, interacts with air-2. In terms of processing, autophosphorylates in vitro. Phosphorylation on Ser-634 by air-2 enhances catalytic activity.

The protein localises to the nucleus. It carries out the reaction L-seryl-[protein] + ATP = O-phospho-L-seryl-[protein] + ADP + H(+). The enzyme catalyses L-threonyl-[protein] + ATP = O-phospho-L-threonyl-[protein] + ADP + H(+). Its function is as follows. Essential for appropriate transcription during embryonic development. May act during transcription elongation to activate the RNA polymerase II large subunit (ama-1) by phosphorylating the Ser-2 residues of the C-terminal domain 7-residue repeats. Does not phosphorylate histone H3. This is Serine/threonine-protein kinase tousled-like 1 (tlk-1) from Caenorhabditis elegans.